A 161-amino-acid chain; its full sequence is Large ribosomal subunit protein bL21m (161 aa).

Residues 1-35 constitute a mitochondrion transit peptide; it reads MLQLKFIWPVARITPIYRPFTSHPFRNLATSSSIS.

Belongs to the bacterial ribosomal protein bL21 family. In terms of assembly, component of the mitochondrial large ribosomal subunit (mt-LSU). Mature yeast 74S mitochondrial ribosomes consist of a small (37S) and a large (54S) subunit. The 37S small subunit contains a 15S ribosomal RNA (15S mt-rRNA) and 34 different proteins. The 54S large subunit contains a 21S rRNA (21S mt-rRNA) and 46 different proteins.

The protein localises to the mitochondrion. Component of the mitochondrial ribosome (mitoribosome), a dedicated translation machinery responsible for the synthesis of mitochondrial genome-encoded proteins, including at least some of the essential transmembrane subunits of the mitochondrial respiratory chain. The mitoribosomes are attached to the mitochondrial inner membrane and translation products are cotranslationally integrated into the membrane. This Saccharomyces cerevisiae (strain ATCC 204508 / S288c) (Baker's yeast) protein is Large ribosomal subunit protein bL21m (MRPL49).